Consider the following 162-residue polypeptide: Caveolin-2 (162 aa).

The Cytoplasmic portion of the chain corresponds to 1–86; the sequence is MGLETEKADV…FEISKYVIYK (86 aa). Tyrosine 19 is modified (phosphotyrosine; by SRC). 2 positions are modified to phosphoserine: serine 20 and serine 23. Tyrosine 27 bears the Phosphotyrosine; by SRC mark. Position 36 is a phosphoserine (serine 36). Positions 87–107 form an intramembrane region, helical; it reads FLTFFLAIPMAFAAGILFAIL. Over 108-162 the chain is Cytoplasmic; sequence SCLHIWIIMPFVKTCLMVLPSVQTIWKTITDVVIAPLCTSVGRSFSSISLQLSHD.

The protein belongs to the caveolin family. As to quaternary structure, monomer or homodimer. Interacts with CAV1; the interaction forms a stable heterooligomeric complex that is required for targeting to lipid rafts and for caveolae formation. Tyrosine phosphorylated forms do not form heterooligomers with the Tyr-19-phosphorylated form existing as a monomer or dimer, and the Tyr-27-form as a monomer only. Interacts (tyrosine phosphorylated form) with the SH2 domain-containing proteins, RASA1, NCK1 and SRC. Interacts (tyrosine phosphorylated form) with INSR, the interaction (Tyr-27-phosphorylated form) is increased on insulin stimulation. Interacts (Tyr-19 phosphorylated form) with MAPK1 (phosphorylated form); the interaction, promoted by insulin, leads to nuclear location and MAPK1 activation. Interacts with STAT3; the interaction is increased on insulin-induced tyrosine phosphorylation leading to STAT activation. Phosphorylated on serine and tyrosine residues. CAV1 promotes phosphorylation on Ser-23 which then targets the complex to the plasma membrane, lipid rafts and caveolae. Phosphorylation on Ser-36 appears to modulate mitosis in endothelial cells. Phosphorylation on both Tyr-19 and Tyr-27 is required for insulin-induced 'Ser-727' phosphorylation of STAT3 and its activation. Phosphorylation on Tyr-19 is required for insulin-induced phosphorylation of MAPK1 and DNA binding of STAT3. Tyrosine phosphorylation is induced by both EGF and insulin (By. similarity).

It is found in the nucleus. It localises to the cytoplasm. Its subcellular location is the golgi apparatus membrane. The protein resides in the cell membrane. The protein localises to the membrane. It is found in the caveola. Functionally, may act as a scaffolding protein within caveolar membranes. Interacts directly with G-protein alpha subunits and can functionally regulate their activity. Acts as an accessory protein in conjunction with CAV1 in targeting to lipid rafts and driving caveolae formation. The Ser-36 phosphorylated form has a role in modulating mitosis in endothelial cells. Positive regulator of cellular mitogenesis of the MAPK signaling pathway. Required for the insulin-stimulated nuclear translocation and activation of MAPK1 and STAT3, and the subsequent regulation of cell cycle progression. The protein is Caveolin-2 (CAV2) of Mustela putorius furo (European domestic ferret).